The sequence spans 191 residues: FAD-linked sulfhydryl oxidase ERV1 (191 aa).

The ERV/ALR sulfhydryl oxidase domain occupies Gly72 to Trp172. Lys76, Arg81, Trp84, Glu121, His125, Cys148, His151, Asn152, Asn155, Lys160, and Arg171 together coordinate FAD. Cys119 and Cys122 are oxidised to a cystine. A disulfide bridge connects residues Cys148 and Cys165. A disulfide bridge connects residues Cys177 and Cys182. The short motif at Cys177–Cys182 is the Required for dimerization and substrate specificity element.

In terms of assembly, homodimer. Requires FAD as cofactor. Post-translationally, contains three disulfide bonds; one catalytic disulfide (Cys-119 to Cys-122), one structural disulfide (Cys-148 to Cys-165), and one shuttle disulfide (Cys-177 to Cys-182).

It localises to the mitochondrion. The catalysed reaction is 2 R'C(R)SH + O2 = R'C(R)S-S(R)CR' + H2O2. Functionally, FAD-dependent sulfhydryl oxidase that catalyzes disulfide bond formation. Oxidizes thioredoxin in vitro. Required for the import and folding of small cysteine-containing proteins in the mitochondrial intermembrane space, and can act independently of the oxidoreductase MIA40. Can oxidize the cytochrome c oxidase assembly protein COX19, a typical substrate of MIA40. In Arabidopsis thaliana (Mouse-ear cress), this protein is FAD-linked sulfhydryl oxidase ERV1 (ERV1).